Consider the following 81-residue polypeptide: Relaxin-like protein AGF (81 aa).

Disulfide bonds link cysteine 14/cysteine 66, cysteine 26/cysteine 79, and cysteine 65/cysteine 70. Asparagine 37 carries N-linked (GlcNAc...) asparagine glycosylation.

It belongs to the insulin family. In terms of assembly, heterodimer of a B chain and an A chain linked by two disulfide bonds.

Its subcellular location is the secreted. Uncertain. The sequence is that of Relaxin-like protein AGF from Hypanus sabinus (Atlantic stingray).